A 158-amino-acid polypeptide reads, in one-letter code: NADPH-dependent 7-cyano-7-deazaguanine reductase (158 aa).

Cysteine 56 (thioimide intermediate) is an active-site residue. The active-site Proton donor is the aspartate 63. Residues 78 to 80 (VES) and 97 to 98 (HE) each bind substrate.

The protein belongs to the GTP cyclohydrolase I family. QueF type 1 subfamily.

The protein resides in the cytoplasm. It catalyses the reaction 7-aminomethyl-7-carbaguanine + 2 NADP(+) = 7-cyano-7-deazaguanine + 2 NADPH + 3 H(+). It participates in tRNA modification; tRNA-queuosine biosynthesis. Catalyzes the NADPH-dependent reduction of 7-cyano-7-deazaguanine (preQ0) to 7-aminomethyl-7-deazaguanine (preQ1). In Rhodopseudomonas palustris (strain BisB5), this protein is NADPH-dependent 7-cyano-7-deazaguanine reductase.